The following is a 374-amino-acid chain: DNA replication and repair protein RecF (374 aa).

34 to 41 contributes to the ATP binding site; the sequence is GNNGAGKT.

Belongs to the RecF family.

The protein localises to the cytoplasm. Its function is as follows. The RecF protein is involved in DNA metabolism; it is required for DNA replication and normal SOS inducibility. RecF binds preferentially to single-stranded, linear DNA. It also seems to bind ATP. In Rhizobium etli (strain CIAT 652), this protein is DNA replication and repair protein RecF.